The primary structure comprises 303 residues: GPN-loop GTPase 2 (303 aa).

29–34 (GSGKST) provides a ligand contact to GTP. The Gly-Pro-Asn (GPN)-loop; involved in dimer interface signature appears at 85-87 (GPN). 187-190 (SKMD) is a GTP binding site.

Belongs to the GPN-loop GTPase family. In terms of assembly, heterodimers with gpn1 or gpn3. Binds to RNA polymerase II (RNAPII).

Small GTPase required for proper localization of RNA polymerase II and III (RNAPII and RNAPIII). May act at an RNAP assembly step prior to nuclear import. The protein is GPN-loop GTPase 2 of Xenopus tropicalis (Western clawed frog).